Consider the following 442-residue polypeptide: D-inositol 3-phosphate glycosyltransferase (442 aa).

A 1D-myo-inositol 3-phosphate-binding site is contributed by histidine 26. Residues 32–33 (QP) and glycine 40 contribute to the UDP-N-acetyl-alpha-D-glucosamine site. 1D-myo-inositol 3-phosphate-binding positions include 37–42 (DAGGMN), lysine 95, tyrosine 128, threonine 152, and arginine 172. Positions 246, 251, and 304 each coordinate UDP-N-acetyl-alpha-D-glucosamine. Positions 313, 314, and 316 each coordinate Mg(2+). Residues glutamate 326 and glutamate 334 each contribute to the UDP-N-acetyl-alpha-D-glucosamine site. Residue threonine 340 participates in Mg(2+) binding.

This sequence belongs to the glycosyltransferase group 1 family. MshA subfamily. Homodimer.

The catalysed reaction is 1D-myo-inositol 3-phosphate + UDP-N-acetyl-alpha-D-glucosamine = 1D-myo-inositol 2-acetamido-2-deoxy-alpha-D-glucopyranoside 3-phosphate + UDP + H(+). Catalyzes the transfer of a N-acetyl-glucosamine moiety to 1D-myo-inositol 3-phosphate to produce 1D-myo-inositol 2-acetamido-2-deoxy-glucopyranoside 3-phosphate in the mycothiol biosynthesis pathway. This chain is D-inositol 3-phosphate glycosyltransferase, found in Mycolicibacterium gilvum (strain PYR-GCK) (Mycobacterium gilvum (strain PYR-GCK)).